A 387-amino-acid polypeptide reads, in one-letter code: Succinate--CoA ligase [ADP-forming] subunit beta (387 aa).

One can recognise an ATP-grasp domain in the interval Lys-9–Glu-244. Residues Lys-46, Gly-53 to Gly-55, Glu-99, Ala-102, and Glu-107 contribute to the ATP site. Mg(2+) is bound by residues Asn-199 and Asp-213. Substrate-binding positions include Asn-264 and Gly-321 to Val-323.

The protein belongs to the succinate/malate CoA ligase beta subunit family. Heterotetramer of two alpha and two beta subunits. It depends on Mg(2+) as a cofactor.

It catalyses the reaction succinate + ATP + CoA = succinyl-CoA + ADP + phosphate. The enzyme catalyses GTP + succinate + CoA = succinyl-CoA + GDP + phosphate. It functions in the pathway carbohydrate metabolism; tricarboxylic acid cycle; succinate from succinyl-CoA (ligase route): step 1/1. Succinyl-CoA synthetase functions in the citric acid cycle (TCA), coupling the hydrolysis of succinyl-CoA to the synthesis of either ATP or GTP and thus represents the only step of substrate-level phosphorylation in the TCA. The beta subunit provides nucleotide specificity of the enzyme and binds the substrate succinate, while the binding sites for coenzyme A and phosphate are found in the alpha subunit. The chain is Succinate--CoA ligase [ADP-forming] subunit beta from Campylobacter jejuni subsp. jejuni serotype O:6 (strain 81116 / NCTC 11828).